Here is a 1032-residue protein sequence, read N- to C-terminus: Vacuolar membrane protease (1032 aa).

Over methionine 1–proline 11 the chain is Cytoplasmic. Residues glycine 12–valine 32 form a helical membrane-spanning segment. Topologically, residues glutamine 33–alanine 415 are vacuolar. N-linked (GlcNAc...) asparagine glycans are attached at residues asparagine 50, asparagine 138, and asparagine 147. Histidine 194 and aspartate 206 together coordinate Zn(2+). Glutamate 240 (proton acceptor) is an active-site residue. The Zn(2+) site is built by glutamate 241, glutamate 266, and histidine 339. A helical transmembrane segment spans residues tryptophan 416 to valine 436. Over arginine 437–arginine 469 the chain is Cytoplasmic. Residues phenylalanine 470 to lysine 490 traverse the membrane as a helical segment. The Vacuolar segment spans residues valine 491–proline 493. A helical transmembrane segment spans residues leucine 494–valine 514. Residues serine 515–arginine 532 lie on the Cytoplasmic side of the membrane. A helical transmembrane segment spans residues glycine 533 to alanine 553. Residues glutamate 554–glycine 560 lie on the Vacuolar side of the membrane. A helical transmembrane segment spans residues alanine 561 to leucine 581. Residues glutamate 582 to tryptophan 701 are Cytoplasmic-facing. The tract at residues glutamine 595–asparagine 688 is disordered. A compositionally biased stretch (acidic residues) spans glutamate 599–glutamine 608. A compositionally biased stretch (polar residues) spans serine 651–asparagine 660. A helical membrane pass occupies residues phenylalanine 702–valine 722. At glutamine 723–leucine 738 the chain is on the vacuolar side. The helical transmembrane segment at alanine 739–isoleucine 759 threads the bilayer. At histidine 760–valine 766 the chain is on the cytoplasmic side. A helical membrane pass occupies residues proline 767 to phenylalanine 787. Topologically, residues serine 788–alanine 1032 are vacuolar. Asparagine 940 carries an N-linked (GlcNAc...) asparagine glycan.

The protein belongs to the peptidase M28 family. Zn(2+) is required as a cofactor.

It localises to the vacuole membrane. Functionally, may be involved in vacuolar sorting and osmoregulation. The sequence is that of Vacuolar membrane protease from Metarhizium robertsii (strain ARSEF 23 / ATCC MYA-3075) (Metarhizium anisopliae (strain ARSEF 23)).